The following is a 279-amino-acid chain: Sulfur carrier protein FdhD (279 aa).

Catalysis depends on C112, which acts as the Cysteine persulfide intermediate.

It belongs to the FdhD family.

The protein localises to the cytoplasm. Its function is as follows. Required for formate dehydrogenase (FDH) activity. Acts as a sulfur carrier protein that transfers sulfur from IscS to the molybdenum cofactor prior to its insertion into FDH. The sequence is that of Sulfur carrier protein FdhD from Nocardia farcinica (strain IFM 10152).